The following is a 502-amino-acid chain: Arabinose import ATP-binding protein AraG (502 aa).

ABC transporter domains lie at 5–240 (LEFS…MVGR) and 253–496 (LGGI…LPDK). Residue 37 to 44 (GENGAGKS) coordinates ATP.

It belongs to the ABC transporter superfamily. Arabinose importer (TC 3.A.1.2.2) family. As to quaternary structure, the complex is composed of two ATP-binding proteins (AraG), two transmembrane proteins (AraH) and a solute-binding protein (AraF).

The protein localises to the cell inner membrane. The enzyme catalyses L-arabinose(out) + ATP + H2O = L-arabinose(in) + ADP + phosphate + H(+). Part of the ABC transporter complex AraFGH involved in arabinose import. Responsible for energy coupling to the transport system. The chain is Arabinose import ATP-binding protein AraG from Rhizobium johnstonii (strain DSM 114642 / LMG 32736 / 3841) (Rhizobium leguminosarum bv. viciae).